Reading from the N-terminus, the 438-residue chain is Adenylosuccinate synthetase (438 aa).

Residues 12-18 (GDEGKGK) and 40-42 (GHT) contribute to the GTP site. Residue Asp-13 is the Proton acceptor of the active site. Residues Asp-13 and Gly-40 each contribute to the Mg(2+) site. Residues 13-16 (DEGK), 38-41 (NAGH), Thr-128, Arg-142, Gln-223, Thr-238, and Arg-302 contribute to the IMP site. The active-site Proton donor is the His-41. Residue 298–304 (TTTGRPR) coordinates substrate. Residues Arg-304, 330–332 (KLD), and 412–414 (GVG) each bind GTP.

It belongs to the adenylosuccinate synthetase family. In terms of assembly, homodimer. It depends on Mg(2+) as a cofactor.

It is found in the cytoplasm. It carries out the reaction IMP + L-aspartate + GTP = N(6)-(1,2-dicarboxyethyl)-AMP + GDP + phosphate + 2 H(+). The protein operates within purine metabolism; AMP biosynthesis via de novo pathway; AMP from IMP: step 1/2. In terms of biological role, plays an important role in the de novo pathway of purine nucleotide biosynthesis. Catalyzes the first committed step in the biosynthesis of AMP from IMP. The polypeptide is Adenylosuccinate synthetase (Leifsonia xyli subsp. xyli (strain CTCB07)).